An 876-amino-acid chain; its full sequence is MEMKPKYDPREVEAGRYEEWVKNGYFKPSEDKSKETYTIVIPPPNVTGKLHLGHAWDTTLQDIITRMKRMQGYDTLYLPGMDHAGIATQAKVEAKLNEQGITRYDLGREKFLEQAWDWKEEYASFIRAQWAKLGLGLDYSRERFTLDEGLSKAVKKVFVDLYNKGIIYRGERIINWDPKARTALSDIEVIHEDVQGAFYHFKYPYADGEGFIEIATTRPETMLGDTAIVVNPNDERYKDVIGKTVILPIVGRELPILADEYVDIDFGSGAMKVTPAHDPNDFEIGQRHQLENIIVMDENGKMNDKAGKYEGMDRFDCRKQLVKDLKEQDLVIKIEDHFHSVGHSERSGAVVEPYLSTQWFVRMEDLAKRSLDNQKTDDRIDFYPQRFEHTFNQWMENIRDWTISRQLWWGHQIPAWYHKETGEIYVGEEAPTDIENWQQDEDVLDTWFSSALWPFSTLGWPDLESEDFKRYYPTNALVTGYDIIFFWVARMIFQGLEFTDRRPFNDVLLHGLVRAEDGRKMSKSLGNGVDPMDVIDEYGADSLRYFLATGSSPGHDLRYSTEKVESVWNFINKIWNGARFSLMNIGEDFKVEDIDLSGNLSLADKWILTRLNETIATVTDLSDKYEFGEVGRALYNFIWDDFCDWYIEMSKIPMNSNDEEQKQVTRSVLSYTLDNIMRMLHPFMPFVTEKIWQSLPHEGDTIVKASWPEVRESLIFEESKQTMQQLVEIIKSVRQSRVEVNTPLSKEIPILIQAKDKEIETTLSQNKDYLIKFCNPSTLNISTDVEIPEKAMTSVVIAGKVVLPLEGLIDMDKEISRLEKELAKLQSELDRVDKKLSNENFVSKAPEKVINEEKRKKQDYQEKYDGVKARIEQLKA.

The short motif at 44–54 (PNVTGKLHLGH) is the 'HIGH' region element. The 'KMSKS' region motif lies at 520–524 (KMSKS). An ATP-binding site is contributed by Lys523. Residues 805-876 (LEGLIDMDKE…VKARIEQLKA (72 aa)) adopt a coiled-coil conformation.

This sequence belongs to the class-I aminoacyl-tRNA synthetase family. ValS type 1 subfamily. As to quaternary structure, monomer.

It localises to the cytoplasm. It carries out the reaction tRNA(Val) + L-valine + ATP = L-valyl-tRNA(Val) + AMP + diphosphate. Its function is as follows. Catalyzes the attachment of valine to tRNA(Val). As ValRS can inadvertently accommodate and process structurally similar amino acids such as threonine, to avoid such errors, it has a 'posttransfer' editing activity that hydrolyzes mischarged Thr-tRNA(Val) in a tRNA-dependent manner. The protein is Valine--tRNA ligase of Staphylococcus aureus (strain Mu3 / ATCC 700698).